The sequence spans 894 residues: MASSSKASDSSQRSKRSDQGMGKDAAAASVVPIHANLTQLIRQVQSGRLAYIKEKLEVNRKTLQRHSCSLFDVAAAAEVASRGTDGGNALSQRAAERQCGSDLANGIGERDVVSVQEENLATGTLALSSSGATAQRTIVRFVKLPLVEKIPPYTTWIFLDKNQRMADDQSVVGRRRIYYDTVGNEALICSDSDEEIPEPEEEKHFFTKGEDHLIWRATQDHGLNQEVVNVLCQFIGATPSEIEERSEVLFEKNEKHSGSSDKIESRLSLDKTMDAVLDSFDNLFCRRCLVFDCRLHGCSQNLVFPCEKQPYSFDPDENKKPCGHLCYLRFPQWREGFKEMHDDGLAGGATYTMESGTASQRVDVNVMYESEDSNRQKGNIRSMTLVGTSGSKIISSVSAEESTTTPSADISETENVSSDLPPSSLRKHKISKHGPRYREHSPGKRQKVFTSDISFEGNIMNKLSIPEIRDTRLESRESGGDKLRILDESTKKTSRKDMCGESPATTMENVGRQSNKVSSTKNFLESTLSCWSALERDLYLKGIEIFGKNSCLIARNLLSGLKTCIEVANYMYNNGAAMAKRPLLNKSISGDFAENEQDYMEQDMAARTRIYRRRGRNRKLKYTWKSAGHPTVRKRTDDGKQCYTQYSPCACQQMCGKDCPCADKGTCCEKYCGCSKSCKNKFRGCHCAKSQCRSRQCPCFAASRECDPDVCRNCWVSCGDGSLGEPLARGDGYQCGNMKLLLKQQQRILLGRSDVAGWGAFIKNPVNKNDYLGEYTGELISHKEADKRGKIYDRANSSFLFDLNDQYVLDAYRKGDKLKFANHSSNPNCYAKVMLVAGDHRVGIYAKEHIEASEELFYDYRYGPDQAPAWARRPEGSKKDEASVSHRRAHKVAR.

Residues 1-11 (MASSSKASDSS) show a composition bias toward low complexity. Disordered stretches follow at residues 1–25 (MASSSKASDSSQRSKRSDQGMGKDA), 395–447 (SSVS…KRQK), and 491–513 (KKTSRKDMCGESPATTMENVGRQ). The segment covering 395 to 421 (SSVSAEESTTTPSADISETENVSSDLP) has biased composition (polar residues). The segment covering 425-435 (LRKHKISKHGP) has biased composition (basic residues). A compositionally biased stretch (polar residues) spans 503 to 513 (PATTMENVGRQ). Residues 527 to 577 (TLSCWSALERDLYLKGIEIFGKNSCLIARNLLSGLKTCIEVANYMYNNGAA) enclose the SANT domain. The region spanning 627–731 (AGHPTVRKRT…SLGEPLARGD (105 aa)) is the CXC domain. The SET domain occupies 746-861 (QRILLGRSDV…ASEELFYDYR (116 aa)). The tract at residues 867–894 (APAWARRPEGSKKDEASVSHRRAHKVAR) is disordered. The span at 872–884 (RRPEGSKKDEASV) shows a compositional bias: basic and acidic residues. Residues 885 to 894 (SHRRAHKVAR) are compositionally biased toward basic residues.

This sequence belongs to the class V-like SAM-binding methyltransferase superfamily. Histone-lysine methyltransferase family. EZ subfamily.

It is found in the nucleus. It carries out the reaction L-lysyl(27)-[histone H3] + 3 S-adenosyl-L-methionine = N(6),N(6),N(6)-trimethyl-L-lysyl(27)-[histone H3] + 3 S-adenosyl-L-homocysteine + 3 H(+). Functionally, polycomb group (PcG) protein. Catalytic subunit of some PcG multiprotein complex, which methylates 'Lys-27' of histone H3, leading to transcriptional repression of the affected target genes. PcG proteins are not required to initiate repression, but to maintain it during later stages of development. The sequence is that of Histone-lysine N-methyltransferase EZ2 (EZ2) from Zea mays (Maize).